Here is a 640-residue protein sequence, read N- to C-terminus: Threonine--tRNA ligase (640 aa).

The TGS domain maps to 1–61 (MPIIALPDGN…EKDSEVNIIT (61 aa)). The catalytic stretch occupies residues 242–533 (DHRRIAKQMS…LIEHYAGRLP (292 aa)). Zn(2+) contacts are provided by cysteine 333, histidine 384, and histidine 510.

It belongs to the class-II aminoacyl-tRNA synthetase family. Homodimer. The cofactor is Zn(2+).

The protein localises to the cytoplasm. It catalyses the reaction tRNA(Thr) + L-threonine + ATP = L-threonyl-tRNA(Thr) + AMP + diphosphate + H(+). Catalyzes the attachment of threonine to tRNA(Thr) in a two-step reaction: L-threonine is first activated by ATP to form Thr-AMP and then transferred to the acceptor end of tRNA(Thr). Also edits incorrectly charged L-seryl-tRNA(Thr). The sequence is that of Threonine--tRNA ligase from Prochlorococcus marinus (strain MIT 9313).